The chain runs to 119 residues: Large ribosomal subunit protein bL20 (119 aa).

Belongs to the bacterial ribosomal protein bL20 family.

In terms of biological role, binds directly to 23S ribosomal RNA and is necessary for the in vitro assembly process of the 50S ribosomal subunit. It is not involved in the protein synthesizing functions of that subunit. The sequence is that of Large ribosomal subunit protein bL20 from Streptococcus mutans serotype c (strain ATCC 700610 / UA159).